Here is a 369-residue protein sequence, read N- to C-terminus: Forkhead box protein I2-A (369 aa).

A DNA-binding region (fork-head) is located at residues 124–218; it reads RPPYSYSSLI…DNGNFRRKRK (95 aa). The tract at residues 215-252 is disordered; the sequence is RKRKRKSESVGAGFDEDSNEDKKPLALKSLGSDSPQGA.

As to expression, localized to the animal hemisphere of early cleavage stage embryos. Zygotic expression is restricted to the dorsal part of the epibranchial placodes of the head within a region located near the tip of the first, second and third visceral pouch.

It is found in the nucleus. Functionally, possible transcriptional activator. The chain is Forkhead box protein I2-A (foxi2-a) from Xenopus laevis (African clawed frog).